The sequence spans 1116 residues: Cation channel sperm-associated auxiliary subunit beta (1116 aa).

Over 1–1053 the chain is Extracellular; the sequence is MESPLIYVSV…QIYVDEAPLP (1053 aa). Residues Cys-35 and Cys-60 are joined by a disulfide bond. 5 N-linked (GlcNAc...) asparagine glycosylation sites follow: Asn-90, Asn-100, Asn-118, Asn-226, and Asn-321. Cys-189 and Cys-302 are disulfide-bonded. Cys-330 and Cys-343 are joined by a disulfide. N-linked (GlcNAc...) asparagine glycosylation is found at Asn-618 and Asn-690. Intrachain disulfides connect Cys-718–Cys-816, Cys-829–Cys-1037, Cys-911–Cys-920, and Cys-922–Cys-937. N-linked (GlcNAc...) asparagine glycosylation is found at Asn-913 and Asn-921. 2 N-linked (GlcNAc...) asparagine glycosylation sites follow: Asn-1010 and Asn-1015. A helical membrane pass occupies residues 1054–1076; that stretch reads FPGHTLIAVATAVVLGGLIFIAF. Over 1077–1116 the chain is Cytoplasmic; the sequence is MFQLQGIHPWRTFQRWIRRNQEKFSSISLSELIHRSKSEE.

In terms of assembly, component of the CatSper complex or CatSpermasome composed of the core pore-forming members CATSPER1, CATSPER2, CATSPER3 and CATSPER4 as well as auxiliary members CATSPERB, CATSPERG, CATSPERD, CATSPERE, CATSPERZ, C2CD6/CATSPERT, TMEM249, TMEM262 and EFCAB9. HSPA1 may be an additional auxiliary complex member. The core complex members CATSPER1, CATSPER2, CATSPER3 and CATSPER4 form a heterotetrameric channel. The auxiliary CATSPERB, CATSPERG, CATSPERD and CATSPERE subunits form a pavilion-like structure over the pore which stabilizes the complex through interactions with CATSPER4, CATSPER3, CATSPER1 and CATSPER2 respectively. TMEM262/CATSPERH interacts with CATSPERB, further stabilizing the complex. C2CD6/CATSPERT interacts at least with CATSPERD and is required for targeting the CatSper complex in the flagellar membrane.

The protein resides in the cell projection. It is found in the cilium. It localises to the flagellum membrane. Its function is as follows. Auxiliary component of the CatSper complex, a complex involved in sperm cell hyperactivation. Sperm cell hyperactivation is needed for sperm motility which is essential late in the preparation of sperm for fertilization. The chain is Cation channel sperm-associated auxiliary subunit beta from Homo sapiens (Human).